The primary structure comprises 154 residues: Large ribosomal subunit protein uL13 (154 aa).

This sequence belongs to the universal ribosomal protein uL13 family. As to quaternary structure, part of the 50S ribosomal subunit.

This protein is one of the early assembly proteins of the 50S ribosomal subunit, although it is not seen to bind rRNA by itself. It is important during the early stages of 50S assembly. The polypeptide is Large ribosomal subunit protein uL13 (Rhizobium rhizogenes (strain K84 / ATCC BAA-868) (Agrobacterium radiobacter)).